Consider the following 1843-residue polypeptide: MADTQTQVAPTPTMRMATAEDLPLPPPPALEDLPLPPPKESFSKFHQQRQASELRRLYRHIHPELRKNLAEAVAEDLAEVLGSEEPTEGDVQCMRWIFENWRLDAIGEHERPAAKEPVLCGDVQATSRKFEEGSFANSTDQEPTRPQPGGGDVRAARWLFETKPLDELTGQAKELEATVREPAASGDVQGTRMLFETRPLDRLGSRPSLQEQSPLELRSEIQELKGDVKKTVKLFQTEPLCAIQDAEGAIHEVKAACREEIQSNAVRSARWLFETRPLDAINQDPSQVRVIRGISLEEGARPDVSATRWIFETQPLDAIREILVDEKDFQPSPDLIPPGPDVQQQQHLFETRALDTLKGDEEAGAEAPPKEEVVPGDVRSTLWLFETKPLDAFRDKVQVGHLQRVDPQDGEGHLSSDSSSALPFSQSAPQRDELKGDVKTFKNLFETLPLDSIGQGEVLAHGSPSREEGTDSAGQAQGIGSPVYAMQDSKGRLHALTSVSREQIVGGDVQGYRWMFETQPLDQLGRSPSTIDVVRGITRQEVVAGDVGTARWLFETQPLEMIHQREQQERQKEEGKSQGDPQPEAPPKGDVQTIRWLFETCPMSELAEKQGSEVTDPTAKAEAQSCTWMFKPQPVDRPVGSREQHLQVSQVPAGERQTDRHVFETEPLQASGRPCGRRPVRYCSRVEIPSGQVSRQKEVFQALEAGKKEEQEPRVIAGSIPAGSVHKFTWLFENCPMGSLAAESIQGGNLLEEQPMSPSGNRMQESQETAAEGTLRTLHATPGILHHGGILMEARGPGELCLAKYVLSGTGQGHPYIRKEELVSGELPRIICQVLRRPDVDQQGLLVQEDPTGQLQLKPLRLPTPGSSGNIEDMDPELQQLLACGLGTSVARTGLVMQETEQGLVALTAYSLQPRLTSKASERSSVQLLASCIDKGDLSGLHSLRWEPPADPSPVPASEGAQSLHPTESIIHVPPLDPSMGMGHLRASGATPCPPQAIGKAVPLAGEAAAPAQLQNTEKQEDSHSGQKGMAVLGKSEGATTTPPGPGAPDLLAAMQSLRMATAEAQSLHQQVLNKHKQGPTPTATSNPIQDGLRKAGATQSNIRPGGGSDPRIPAAPRKVSREEQALPRGLPGGWVTIQDGIYTAHPVRTFDPPGGVQLSQREPQSRHRETALSVQAPRPLQGGPGQSTGPGREEPGGCTQMAWGPPGKAMAEVCPGGLQAAETTLKTAPLGRHILASGPQAAGASPHPHNAFVPPPPTLPAAVTGPDFPAGAHRAEDSIQQASEPLKDPLLHSHSSPAGQRTPGGSQTKTPKLDPTMPPKKKPQLPPKPAHLTQSHPPQRLPKPLPLSPSFSSEVGQREHQRGERDTAIPQPAKVPTTVDQGHIPLARCPSGHSQPSLQHGLSTTAPRPTKNQATGSNAQSSEPPKLNALNHDPTSPQWGPGPSGEQPMEGSHQGAPESPDSLQRNQKELQGLLNQVQALEKEAASSVDVQALRRLFEAVPQLGGAAPQAPAAHQKPEASVEQAFGELTRVSTEVAQLKEQTLARLLDIEEAVHKALSSMSSLQPEASARGHFQGPPKDHSAHKISVTVSSSARPSGSGQEVGGQTAVKNQAKVECHTEAQSQVKIRNHTEARGHTASTAPSTRRQETSREYLCPPRVLPSSRDSPSSPTFISIQSATRKPLETPSFKGNPDVSVKSTQLAQDIGQALLHQKGVQDKTGKKDITQCSVQPEPAPPSASPLPRGWQKSVLELQTGPGSSQHYGAMRTVTEQYEEVDQFGNTVLMSSTTVTEQAEPPRNPGSHLGLHASPLLRQFLHSPAGFSSDLTEAETVQVSCSYSQPAAQ.

A compositionally biased stretch (polar residues) spans 1 to 10 (MADTQTQVAP). The segment at 1–48 (MADTQTQVAPTPTMRMATAEDLPLPPPPALEDLPLPPPKESFSKFHQQ) is disordered. Residues 1–54 (MADTQTQVAPTPTMRMATAEDLPLPPPPALEDLPLPPPKESFSKFHQQRQASEL) are interaction with VASP. Residues 23–39 (PLPPPPALEDLPLPPPK) show a composition bias toward pro residues. Xin repeat units lie at residues 89–104 (GDVQ…WRLD), 121–136 (GDVQ…GSFA), 151–166 (GDVR…KPLD), and 186–201 (GDVQ…RPLD). The tract at residues 132 to 151 (EGSFANSTDQEPTRPQPGGG) is disordered. Residues Ser205, Ser208, and Ser213 each carry the phosphoserine modification. Xin repeat units lie at residues 226 to 241 (GDVK…EPLC) and 264 to 279 (NAVR…RPLD). The residue at position 295 (Ser295) is a Phosphoserine. A Xin 7 repeat occupies 302–317 (PDVSATRWIFETQPLD). A Phosphoserine modification is found at Ser332. Xin repeat units lie at residues 340–355 (PDVQ…RALD) and 376–391 (GDVR…KPLD). The tract at residues 406–432 (DPQDGEGHLSSDSSSALPFSQSAPQRD) is disordered. The segment covering 415–429 (SSDSSSALPFSQSAP) has biased composition (low complexity). Residues 436–451 (GDVKTFKNLFETLPLD) form a Xin 10 repeat. Positions 455 to 479 (QGEVLAHGSPSREEGTDSAGQAQGI) are disordered. Xin repeat units follow at residues 507–522 (GDVQ…QPLD) and 545–560 (GDVG…QPLE). The tract at residues 531–632 (IDVVRGITRQ…AQSCTWMFKP (102 aa)) is interaction with CTNNB1. The segment covering 564–577 (QREQQERQKEEGKS) has biased composition (basic and acidic residues). A disordered region spans residues 564–591 (QREQQERQKEEGKSQGDPQPEAPPKGDV). Xin repeat units lie at residues 589–604 (GDVQ…CPMS), 621–636 (AEAQ…QPVD), 654–669 (GERQ…EPLQ), 691–706 (GQVS…LEAG), and 723–738 (GSVH…CPMG). 5 disordered regions span residues 943–999 (SLRW…QAIG), 1063–1205 (AEAQ…MAWG), 1238–1277 (SGPQ…HRAE), 1289–1471 (DPLL…QKEL), and 1561–1696 (MSSL…DVSV). 2 stretches are compositionally biased toward polar residues: residues 1064–1073 (EAQSLHQQVL) and 1080–1089 (PTPTATSNPI). Polar residues predominate over residues 1294–1311 (SHSSPAGQRTPGGSQTKT). The span at 1357-1368 (GQREHQRGERDT) shows a compositional bias: basic and acidic residues. Residues 1393-1424 (GHSQPSLQHGLSTTAPRPTKNQATGSNAQSSE) show a composition bias toward polar residues. Positions 1462 to 1490 (DSLQRNQKELQGLLNQVQALEKEAASSVD) form a coiled coil. Composition is skewed to polar residues over residues 1588–1600 (VTVS…SGSG) and 1663–1679 (SRDS…QSAT). Residues 1685 to 1843 (TPSFKGNPDV…SCSYSQPAAQ (159 aa)) form an interaction with FLNC region.

The protein belongs to the Xin family. As to quaternary structure, interacts (via N-terminus) with CTTN; the interaction promotes CTTN localization to intercalated disks in cardiomyocytes. Interacts with CTNNB1. Interacts with FLNC and VASP. Interacts with F-actin. Expressed in skeletal muscle at areas of Z-disk disruption in a longitudinal pattern spanning one or more sarcomeres (at protein level). As to expression, expressed in the heart (at protein level). In terms of tissue distribution, expressed in the heart.

The protein resides in the cell junction. It is found in the adherens junction. It localises to the desmosome. Protects actin filaments from depolymerization. Required for correct cardiac intercalated disk ultrastructure via maintenance of cell-cell adhesion stability, and as a result maintains cardiac organ morphology, conductance and heart beat rhythm. Required for development of normal skeletal muscle morphology and muscle fiber type composition. Plays a role in regulating muscle satellite cell activation and survival, as a result promotes muscle fiber recovery from injury and fatigue. The chain is Xin actin-binding repeat-containing protein 1 from Homo sapiens (Human).